The primary structure comprises 192 residues: uncharacterized protein (192 aa).

This is an uncharacterized protein from Aquifex aeolicus (strain VF5).